Reading from the N-terminus, the 324-residue chain is Galectin-4 (324 aa).

2 Galectin domains span residues 19–150 (YKRP…INFL) and 196–324 (YVGT…YVQI). An a beta-D-galactoside-binding site is contributed by 257–263 (WGSEERK). Position 259 is a phosphoserine (Ser-259).

As to quaternary structure, monomer. As to expression, highly expressed in full-length form in small and large intestine and stomach but was not detected in other tissues including lung, liver, kidney and spleen.

Galectin that binds lactose and a related range of sugars. This chain is Galectin-4 (Lgals4), found in Rattus norvegicus (Rat).